The following is a 352-amino-acid chain: Holliday junction branch migration complex subunit RuvB (352 aa).

Residues 1–42 (MAIVSSSAGRADSQPPAAKSRVVDASPLPEEASPAREDGLRP) form a disordered region. Positions 13 to 201 (SQPPAAKSRV…FGLIQRLEFY (189 aa)) are large ATPase domain (RuvB-L). The segment covering 33-42 (SPAREDGLRP) has biased composition (basic and acidic residues). ATP is bound by residues Leu40, Arg41, Gly82, Lys85, Thr86, Thr87, Arg191, Tyr201, and Arg238. Thr86 serves as a coordination point for Mg(2+). The tract at residues 202–273 (GLEDLQAIVE…LVDEALTLHR (72 aa)) is small ATPAse domain (RuvB-S). A head domain (RuvB-H) region spans residues 276 to 352 (ARGLDASDRR…RRHLGWPELP (77 aa)). Positions 331 and 336 each coordinate DNA.

Belongs to the RuvB family. In terms of assembly, homohexamer. Forms an RuvA(8)-RuvB(12)-Holliday junction (HJ) complex. HJ DNA is sandwiched between 2 RuvA tetramers; dsDNA enters through RuvA and exits via RuvB. An RuvB hexamer assembles on each DNA strand where it exits the tetramer. Each RuvB hexamer is contacted by two RuvA subunits (via domain III) on 2 adjacent RuvB subunits; this complex drives branch migration. In the full resolvosome a probable DNA-RuvA(4)-RuvB(12)-RuvC(2) complex forms which resolves the HJ.

Its subcellular location is the cytoplasm. The enzyme catalyses ATP + H2O = ADP + phosphate + H(+). Its function is as follows. The RuvA-RuvB-RuvC complex processes Holliday junction (HJ) DNA during genetic recombination and DNA repair, while the RuvA-RuvB complex plays an important role in the rescue of blocked DNA replication forks via replication fork reversal (RFR). RuvA specifically binds to HJ cruciform DNA, conferring on it an open structure. The RuvB hexamer acts as an ATP-dependent pump, pulling dsDNA into and through the RuvAB complex. RuvB forms 2 homohexamers on either side of HJ DNA bound by 1 or 2 RuvA tetramers; 4 subunits per hexamer contact DNA at a time. Coordinated motions by a converter formed by DNA-disengaged RuvB subunits stimulates ATP hydrolysis and nucleotide exchange. Immobilization of the converter enables RuvB to convert the ATP-contained energy into a lever motion, pulling 2 nucleotides of DNA out of the RuvA tetramer per ATP hydrolyzed, thus driving DNA branch migration. The RuvB motors rotate together with the DNA substrate, which together with the progressing nucleotide cycle form the mechanistic basis for DNA recombination by continuous HJ branch migration. Branch migration allows RuvC to scan DNA until it finds its consensus sequence, where it cleaves and resolves cruciform DNA. The chain is Holliday junction branch migration complex subunit RuvB from Prochlorococcus marinus (strain MIT 9313).